Reading from the N-terminus, the 149-residue chain is Endoribonuclease YbeY (149 aa).

Residues His-112, His-116, and His-122 each coordinate Zn(2+).

It belongs to the endoribonuclease YbeY family. It depends on Zn(2+) as a cofactor.

Its subcellular location is the cytoplasm. Single strand-specific metallo-endoribonuclease involved in late-stage 70S ribosome quality control and in maturation of the 3' terminus of the 16S rRNA. This is Endoribonuclease YbeY from Methylibium petroleiphilum (strain ATCC BAA-1232 / LMG 22953 / PM1).